A 127-amino-acid polypeptide reads, in one-letter code: Cytochrome b-c1 complex subunit 7, mitochondrial (127 aa).

The protein belongs to the UQCRB/QCR7 family. Component of the ubiquinol-cytochrome c oxidoreductase (cytochrome b-c1 complex, complex III, CIII), a multisubunit enzyme composed of 10 subunits. The complex is composed of 3 respiratory subunits cytochrome b (COB), cytochrome c1 (CYT1) and Rieske protein (RIP1), 2 core protein subunits COR1 and QCR2, and 5 low-molecular weight protein subunits QCR6, QCR7, QCR8, QCR9 and QCR10. The complex exists as an obligatory dimer and forms supercomplexes (SCs) in the inner mitochondrial membrane with a monomer or a dimer of cytochrome c oxidase (complex IV, CIV), resulting in 2 different assemblies (supercomplexes III(2)IV and III(2)IV(2)).

The protein resides in the mitochondrion inner membrane. Its function is as follows. Component of the ubiquinol-cytochrome c oxidoreductase, a multisubunit transmembrane complex that is part of the mitochondrial electron transport chain which drives oxidative phosphorylation. Plays an important role in the uptake of multiple carbon sources such acetate, lactate, amino acids or GlcNAc present in different host niches. The polypeptide is Cytochrome b-c1 complex subunit 7, mitochondrial (Candida albicans (strain SC5314 / ATCC MYA-2876) (Yeast)).